Consider the following 415-residue polypeptide: Nuclear hormone receptor family member nhr-153 (415 aa).

A DNA-binding region (nuclear receptor) is located at residues 26–105; it reads PSVCQICRNP…AGMNPMAIQA (80 aa). 2 NR C4-type zinc fingers span residues 29 to 49 and 65 to 88; these read CQICRNPAIGYHYEVPSCNGC and CFKVSNCLDGNDVIDTSKRVCRAC. Residues 170–406 enclose the NR LBD domain; it reads DQRDLSTALS…DPEVLKKKCI (237 aa).

It belongs to the nuclear hormone receptor family.

The protein resides in the nucleus. Its function is as follows. Orphan nuclear receptor. This Caenorhabditis elegans protein is Nuclear hormone receptor family member nhr-153 (nhr-153).